The primary structure comprises 192 residues: UPF0301 protein BTH_I1462 (192 aa).

This sequence belongs to the UPF0301 (AlgH) family.

This Burkholderia thailandensis (strain ATCC 700388 / DSM 13276 / CCUG 48851 / CIP 106301 / E264) protein is UPF0301 protein BTH_I1462.